The sequence spans 256 residues: Deoxyribose-phosphate aldolase (256 aa).

Residue Asp-102 is the Proton donor/acceptor of the active site. The Schiff-base intermediate with acetaldehyde role is filled by Lys-165. The active-site Proton donor/acceptor is the Lys-197.

The protein belongs to the DeoC/FbaB aldolase family. DeoC type 2 subfamily.

It is found in the cytoplasm. It carries out the reaction 2-deoxy-D-ribose 5-phosphate = D-glyceraldehyde 3-phosphate + acetaldehyde. The protein operates within carbohydrate degradation; 2-deoxy-D-ribose 1-phosphate degradation; D-glyceraldehyde 3-phosphate and acetaldehyde from 2-deoxy-alpha-D-ribose 1-phosphate: step 2/2. Catalyzes a reversible aldol reaction between acetaldehyde and D-glyceraldehyde 3-phosphate to generate 2-deoxy-D-ribose 5-phosphate. The protein is Deoxyribose-phosphate aldolase of Shewanella sp. (strain W3-18-1).